The sequence spans 493 residues: Probable cytosol aminopeptidase (493 aa).

Mn(2+) contacts are provided by Lys-257 and Asp-262. Residue Lys-269 is part of the active site. 3 residues coordinate Mn(2+): Asp-281, Asp-341, and Glu-343. Residue Arg-345 is part of the active site.

This sequence belongs to the peptidase M17 family. Requires Mn(2+) as cofactor.

The protein localises to the cytoplasm. The enzyme catalyses Release of an N-terminal amino acid, Xaa-|-Yaa-, in which Xaa is preferably Leu, but may be other amino acids including Pro although not Arg or Lys, and Yaa may be Pro. Amino acid amides and methyl esters are also readily hydrolyzed, but rates on arylamides are exceedingly low.. It catalyses the reaction Release of an N-terminal amino acid, preferentially leucine, but not glutamic or aspartic acids.. In terms of biological role, presumably involved in the processing and regular turnover of intracellular proteins. Catalyzes the removal of unsubstituted N-terminal amino acids from various peptides. This is Probable cytosol aminopeptidase from Prochlorococcus marinus (strain MIT 9211).